The following is a 388-amino-acid chain: Oligogalacturonide lyase (388 aa).

It localises to the periplasm. It catalyses the reaction 4-(4-deoxy-alpha-D-galact-4-enuronosyl)-D-galacturonate = 2 5-dehydro-4-deoxy-D-glucuronate. Its pathway is glycan metabolism; pectin degradation; 2-dehydro-3-deoxy-D-gluconate from pectin: step 3/5. Involved in degradation of pectin, which causes soft-rod disease in plants. In Pectobacterium atrosepticum (strain SCRI 1043 / ATCC BAA-672) (Erwinia carotovora subsp. atroseptica), this protein is Oligogalacturonide lyase (ogl).